Reading from the N-terminus, the 417-residue chain is Serine hydroxymethyltransferase (417 aa).

Residues Leu-121 and 125–127 (GHL) each bind (6S)-5,6,7,8-tetrahydrofolate. Position 230 is an N6-(pyridoxal phosphate)lysine (Lys-230). 355 to 357 (SPF) is a (6S)-5,6,7,8-tetrahydrofolate binding site.

This sequence belongs to the SHMT family. In terms of assembly, homodimer. It depends on pyridoxal 5'-phosphate as a cofactor.

It is found in the cytoplasm. The enzyme catalyses (6R)-5,10-methylene-5,6,7,8-tetrahydrofolate + glycine + H2O = (6S)-5,6,7,8-tetrahydrofolate + L-serine. The protein operates within one-carbon metabolism; tetrahydrofolate interconversion. It participates in amino-acid biosynthesis; glycine biosynthesis; glycine from L-serine: step 1/1. Catalyzes the reversible interconversion of serine and glycine with tetrahydrofolate (THF) serving as the one-carbon carrier. This reaction serves as the major source of one-carbon groups required for the biosynthesis of purines, thymidylate, methionine, and other important biomolecules. Also exhibits THF-independent aldolase activity toward beta-hydroxyamino acids, producing glycine and aldehydes, via a retro-aldol mechanism. This chain is Serine hydroxymethyltransferase, found in Ruthia magnifica subsp. Calyptogena magnifica.